The following is a 117-amino-acid chain: Putative small ubiquitin-related modifier 6 (117 aa).

The segment at 1–30 is disordered; sequence MSTKSSSIHGRNEVKMEGEKRKDVESESTH. A compositionally biased stretch (basic and acidic residues) spans 10-28; it reads GRNEVKMEGEKRKDVESES. Residues 31-108 form the Ubiquitin-like domain; the sequence is VTLNVKGQDE…IDALLPQESG (78 aa). Residue Gly108 forms a Glycyl lysine isopeptide (Gly-Lys) (interchain with K-? in acceptor proteins) linkage.

The protein belongs to the ubiquitin family. SUMO subfamily. As to quaternary structure, interacts with SAE2, SCE1, SIZ1 and MMS21 Covalently attached to a number of proteins.

Its subcellular location is the nucleus. It is found in the cytoplasm. Ubiquitin-like protein which can be covalently attached to target lysines as a monomer. Does not seem to be involved in protein degradation and may function as an antagonist of ubiquitin in the degradation process. This is Putative small ubiquitin-related modifier 6 (SUMO6) from Arabidopsis thaliana (Mouse-ear cress).